A 227-amino-acid polypeptide reads, in one-letter code: 2-C-methyl-D-erythritol 4-phosphate cytidylyltransferase (227 aa).

It belongs to the IspD/TarI cytidylyltransferase family. IspD subfamily.

It carries out the reaction 2-C-methyl-D-erythritol 4-phosphate + CTP + H(+) = 4-CDP-2-C-methyl-D-erythritol + diphosphate. Its pathway is isoprenoid biosynthesis; isopentenyl diphosphate biosynthesis via DXP pathway; isopentenyl diphosphate from 1-deoxy-D-xylulose 5-phosphate: step 2/6. Catalyzes the formation of 4-diphosphocytidyl-2-C-methyl-D-erythritol from CTP and 2-C-methyl-D-erythritol 4-phosphate (MEP). The protein is 2-C-methyl-D-erythritol 4-phosphate cytidylyltransferase of Caldanaerobacter subterraneus subsp. tengcongensis (strain DSM 15242 / JCM 11007 / NBRC 100824 / MB4) (Thermoanaerobacter tengcongensis).